The sequence spans 274 residues: Capsid protein (274 aa).

A disordered region spans residues 88–113 (RPAKQVLKGSSSKSQQRDEGEVVFTR). A compositionally biased stretch (basic and acidic residues) spans 102-113 (QQRDEGEVVFTR).

Its subcellular location is the virion. In terms of biological role, capsid protein self-assembles to form a capsid about 33 nm in diameter. The capsid encapsulates two genomic RNAs as well as a third, subgenomic RNA (RNA3) (Potential). This Raspberry bushy dwarf virus (isolate Malling Jewel raspberry/R15) (RBDV) protein is Capsid protein.